We begin with the raw amino-acid sequence, 243 residues long: 7-cyano-7-deazaguanine synthase (243 aa).

14 to 24 (FSGGQDSATCL) is a binding site for ATP. Residues Cys-202, Cys-217, Cys-220, and Cys-223 each contribute to the Zn(2+) site.

Belongs to the QueC family. It depends on Zn(2+) as a cofactor.

The catalysed reaction is 7-carboxy-7-deazaguanine + NH4(+) + ATP = 7-cyano-7-deazaguanine + ADP + phosphate + H2O + H(+). Its pathway is purine metabolism; 7-cyano-7-deazaguanine biosynthesis. Catalyzes the ATP-dependent conversion of 7-carboxy-7-deazaguanine (CDG) to 7-cyano-7-deazaguanine (preQ(0)). The sequence is that of 7-cyano-7-deazaguanine synthase from Paraburkholderia phymatum (strain DSM 17167 / CIP 108236 / LMG 21445 / STM815) (Burkholderia phymatum).